We begin with the raw amino-acid sequence, 299 residues long: ATP phosphoribosyltransferase (299 aa).

Belongs to the ATP phosphoribosyltransferase family. Long subfamily. As to quaternary structure, equilibrium between an active dimeric form, an inactive hexameric form and higher aggregates. Interconversion between the various forms is largely reversible and is influenced by the natural substrates and inhibitors of the enzyme. Requires Mg(2+) as cofactor.

Its subcellular location is the cytoplasm. The catalysed reaction is 1-(5-phospho-beta-D-ribosyl)-ATP + diphosphate = 5-phospho-alpha-D-ribose 1-diphosphate + ATP. The protein operates within amino-acid biosynthesis; L-histidine biosynthesis; L-histidine from 5-phospho-alpha-D-ribose 1-diphosphate: step 1/9. Its activity is regulated as follows. Feedback inhibited by histidine. Catalyzes the condensation of ATP and 5-phosphoribose 1-diphosphate to form N'-(5'-phosphoribosyl)-ATP (PR-ATP). Has a crucial role in the pathway because the rate of histidine biosynthesis seems to be controlled primarily by regulation of HisG enzymatic activity. This chain is ATP phosphoribosyltransferase, found in Proteus mirabilis (strain HI4320).